Here is a 143-residue protein sequence, read N- to C-terminus: UPF0201 protein Pisl_1658 (143 aa).

The protein belongs to the UPF0201 family.

The polypeptide is UPF0201 protein Pisl_1658 (Pyrobaculum islandicum (strain DSM 4184 / JCM 9189 / GEO3)).